The sequence spans 262 residues: Phosphonates import ATP-binding protein PhnC (262 aa).

The 249-residue stretch at 5–253 (IRVEKLAKTF…RFDHLYRSIN (249 aa)) folds into the ABC transporter domain. Position 37–44 (37–44 (GPSGSGKS)) interacts with ATP.

It belongs to the ABC transporter superfamily. Phosphonates importer (TC 3.A.1.9.1) family. As to quaternary structure, the complex is composed of two ATP-binding proteins (PhnC), two transmembrane proteins (PhnE) and a solute-binding protein (PhnD).

The protein localises to the cell inner membrane. It carries out the reaction phosphonate(out) + ATP + H2O = phosphonate(in) + ADP + phosphate + H(+). Its function is as follows. Part of the ABC transporter complex PhnCDE involved in phosphonates import. Responsible for energy coupling to the transport system. This Shigella sonnei (strain Ss046) protein is Phosphonates import ATP-binding protein PhnC.